Reading from the N-terminus, the 95-residue chain is Large ribosomal subunit protein bL28 (95 aa).

This sequence belongs to the bacterial ribosomal protein bL28 family.

The protein is Large ribosomal subunit protein bL28 of Orientia tsutsugamushi (strain Ikeda) (Rickettsia tsutsugamushi).